The chain runs to 251 residues: tRNA pseudouridine synthase A (251 aa).

Asp52 acts as the Nucleophile in catalysis. Tyr113 provides a ligand contact to substrate.

It belongs to the tRNA pseudouridine synthase TruA family. In terms of assembly, homodimer.

The catalysed reaction is uridine(38/39/40) in tRNA = pseudouridine(38/39/40) in tRNA. Functionally, formation of pseudouridine at positions 38, 39 and 40 in the anticodon stem and loop of transfer RNAs. This chain is tRNA pseudouridine synthase A, found in Brucella abortus (strain 2308).